We begin with the raw amino-acid sequence, 302 residues long: Heat stress transcription factor B-1 (302 aa).

A compositionally biased stretch (low complexity) spans 1 to 15 (MAAAEAAAAVGKQQQ). 2 disordered regions span residues 1 to 33 (MAAA…PFLT) and 116 to 184 (GIRR…RKDN). Residues 16-28 (KGGGGRGGGGGGP) are compositionally biased toward gly residues. The segment covering 123–133 (TTPQSSKSCGS) has biased composition (polar residues). A compositionally biased stretch (pro residues) spans 139 to 150 (FPPPLPPLPPEP). The segment covering 151-172 (SATTSSGNDRSSSSASSPPRAD) has biased composition (low complexity). Residues 170–202 (RADITSENEQLRKDNQTLTMELARARRHCEELL) adopt a coiled-coil conformation. The hydrophobic repeat HR-A/B stretch occupies residues 180 to 209 (LRKDNQTLTMELARARRHCEELLGFLSRFL). The short motif at 211-218 (VRQLDLRL) is the Nuclear export signal element. A Nuclear localization signal motif is present at residues 263–267 (RKRAR).

Belongs to the HSF family. Class B subfamily. In terms of assembly, homotrimer. Post-translationally, exhibits temperature-dependent phosphorylation.

It localises to the cytoplasm. The protein localises to the nucleus. Transcriptional regulator that specifically binds DNA of heat shock promoter elements (HSE). This is Heat stress transcription factor B-1 (HSFB1) from Oryza sativa subsp. japonica (Rice).